The chain runs to 234 residues: MYLFFSNLSFNDICIITTTIPKMLMNVQSHDQSITYLGCLSQVYLIVNFGSIESCLLAVMAYDRYVAICHPLKYTVIMNHYFCVMLLLFACSLALHMCLFHILMVLILTFCTKTEIPHFFCELAHIIKLTCSDNFINYLLIYTVSVLFFGVHIVGIILSYIYTVSSVLRMSLLGGMYKAFSTCGSHLSVVSLFYGTGFGVHISSPLTDSPRKTVVASVMYTVVTQMHGPFIYSL.

Residues 1–11 (MYLFFSNLSFN) traverse the membrane as a helical segment. Over 12–42 (DICIITTTIPKMLMNVQSHDQSITYLGCLSQ) the chain is Extracellular. C39 and C121 form a disulfide bridge. Residues 43-62 (VYLIVNFGSIESCLLAVMAY) traverse the membrane as a helical segment. Residues 63-84 (DRYVAICHPLKYTVIMNHYFCV) lie on the Cytoplasmic side of the membrane. The chain crosses the membrane as a helical span at residues 85–105 (MLLLFACSLALHMCLFHILMV). The Extracellular portion of the chain corresponds to 106–138 (LILTFCTKTEIPHFFCELAHIIKLTCSDNFINY). A helical membrane pass occupies residues 139–160 (LLIYTVSVLFFGVHIVGIILSY). The Cytoplasmic portion of the chain corresponds to 161–182 (IYTVSSVLRMSLLGGMYKAFST). Residues 183–202 (CGSHLSVVSLFYGTGFGVHI) traverse the membrane as a helical segment. Residues 203-212 (SSPLTDSPRK) lie on the Extracellular side of the membrane. The helical transmembrane segment at 213 to 234 (TVVASVMYTVVTQMHGPFIYSL) threads the bilayer.

It belongs to the G-protein coupled receptor 1 family. As to expression, tongue specific.

The protein localises to the cell membrane. Its function is as follows. Possible taste receptor. The sequence is that of Putative gustatory receptor clone PTE38 from Rattus norvegicus (Rat).